Here is a 381-residue protein sequence, read N- to C-terminus: Cytochrome b (381 aa).

The next 4 helical transmembrane spans lie at 34–54, 78–99, 114–134, and 179–199; these read FGSL…FLAM, WLIR…YLHI, WNIG…GYVL, and FFAF…IHLL. Residues histidine 84 and histidine 98 each contribute to the heme b site. Residues histidine 183 and histidine 197 each contribute to the heme b site. Histidine 202 is an a ubiquinone binding site. 4 helical membrane-spanning segments follow: residues 227–247, 289–309, 321–341, and 348–368; these read YKDL…ALFL, LGGV…PMLH, MTQF…WIGG, and FILV…IIIP.

The protein belongs to the cytochrome b family. In terms of assembly, the cytochrome bc1 complex contains 3 respiratory subunits (MT-CYB, CYC1 and UQCRFS1), 2 core proteins (UQCRC1 and UQCRC2) and probably 6 low-molecular weight proteins. The cofactor is heme b.

It localises to the mitochondrion inner membrane. In terms of biological role, component of the ubiquinol-cytochrome c reductase complex (complex III or cytochrome b-c1 complex) that is part of the mitochondrial respiratory chain. The b-c1 complex mediates electron transfer from ubiquinol to cytochrome c. Contributes to the generation of a proton gradient across the mitochondrial membrane that is then used for ATP synthesis. In Squalus acanthias (Spiny dogfish), this protein is Cytochrome b (mt-cyb).